Consider the following 106-residue polypeptide: Large ribosomal subunit protein eL34 (106 aa).

This sequence belongs to the eukaryotic ribosomal protein eL34 family.

This is Large ribosomal subunit protein eL34 from Hyperthermus butylicus (strain DSM 5456 / JCM 9403 / PLM1-5).